We begin with the raw amino-acid sequence, 490 residues long: Aspartyl/glutamyl-tRNA(Asn/Gln) amidotransferase subunit B (490 aa).

It belongs to the GatB/GatE family. GatB subfamily. Heterotrimer of A, B and C subunits.

It carries out the reaction L-glutamyl-tRNA(Gln) + L-glutamine + ATP + H2O = L-glutaminyl-tRNA(Gln) + L-glutamate + ADP + phosphate + H(+). The catalysed reaction is L-aspartyl-tRNA(Asn) + L-glutamine + ATP + H2O = L-asparaginyl-tRNA(Asn) + L-glutamate + ADP + phosphate + 2 H(+). In terms of biological role, allows the formation of correctly charged Asn-tRNA(Asn) or Gln-tRNA(Gln) through the transamidation of misacylated Asp-tRNA(Asn) or Glu-tRNA(Gln) in organisms which lack either or both of asparaginyl-tRNA or glutaminyl-tRNA synthetases. The reaction takes place in the presence of glutamine and ATP through an activated phospho-Asp-tRNA(Asn) or phospho-Glu-tRNA(Gln). This chain is Aspartyl/glutamyl-tRNA(Asn/Gln) amidotransferase subunit B, found in Burkholderia mallei (strain NCTC 10247).